Consider the following 300-residue polypeptide: Zinc finger CCCH-type antiviral protein 1-like (300 aa).

Ala2 is modified (N-acetylalanine). A compositionally biased stretch (polar residues) spans 252 to 263 (NTDNSSPSTEHS). Residues 252–300 (NTDNSSPSTEHSQGLEKQGVHAAGAAEAGPLASVPAQSAKKPCPVSCEK) form a disordered region. Residues 271-283 (VHAAGAAEAGPLA) are compositionally biased toward low complexity.

This Homo sapiens (Human) protein is Zinc finger CCCH-type antiviral protein 1-like (ZC3HAV1L).